The primary structure comprises 125 residues: Egg cell-secreted protein 1.2 (125 aa).

Positions 1–22 (MASNTSFLFATIAILLVLNISG) are cleaved as a signal peptide.

It belongs to the plant egg cell-secreted peptide family. As to expression, restricted to female reproductive tissues, specifically accumulating in storage vesicles of the unfertilized egg cell.

The protein resides in the cytoplasmic vesicle. It is found in the secreted. Functionally, involved in the regulation of gamete interactions during the double fertilization and to prevent multiple-pollen tube attraction; mediates the redistribution of the gamete fusogen HAP2/GCS1 to the cell surface after secretion upon sperm arrival. This chain is Egg cell-secreted protein 1.2 (EC1.2), found in Arabidopsis thaliana (Mouse-ear cress).